Consider the following 104-residue polypeptide: Iron-sulfur cluster assembly protein CyaY (104 aa).

The protein belongs to the frataxin family.

Functionally, involved in iron-sulfur (Fe-S) cluster assembly. May act as a regulator of Fe-S biogenesis. This Aeromonas salmonicida (strain A449) protein is Iron-sulfur cluster assembly protein CyaY.